Consider the following 89-residue polypeptide: Large ribosomal subunit protein bL27 (89 aa).

The disordered stretch occupies residues 1-21 (MAHKKSGGSSRNGRDSNPKYL).

Belongs to the bacterial ribosomal protein bL27 family.

This is Large ribosomal subunit protein bL27 from Hyphomonas neptunium (strain ATCC 15444).